A 288-amino-acid polypeptide reads, in one-letter code: Proteasome assembly chaperone 1 (288 aa).

The segment at 1–33 is disordered; the sequence is MATFFGEVQSVFSRAVDEEEEDEDDDEEEEEDR. A compositionally biased stretch (acidic residues) spans 17–33; sequence DEEEEDEDDDEEEEEDR.

Belongs to the PSMG1 family. In terms of assembly, forms a heterodimer with psmg2. Degraded by the proteasome upon completion of 20S proteasome maturation.

Its subcellular location is the cytoplasm. The protein resides in the endoplasmic reticulum. Its function is as follows. Chaperone protein which promotes assembly of the 20S proteasome as part of a heterodimer with psmg2. The sequence is that of Proteasome assembly chaperone 1 from Xenopus laevis (African clawed frog).